Here is a 214-residue protein sequence, read N- to C-terminus: UPF0111 protein MJ0629 (214 aa).

Belongs to the UPF0111 family.

The protein is UPF0111 protein MJ0629 of Methanocaldococcus jannaschii (strain ATCC 43067 / DSM 2661 / JAL-1 / JCM 10045 / NBRC 100440) (Methanococcus jannaschii).